Reading from the N-terminus, the 458-residue chain is MALQLYNTLTRQKDIFEPIDPANVRLYACGPTVYDFLHIGNGRMLIVFDLLFRVLRDLYGADHVRYVRNITDVDDKINARAAERGIDIRVLTDEMTAIFHEDAKALNCLPPTVEPRATEHMAEMIAIIEKLVANGHAYIAEGHVLFDVPSMPDYGKLSKRPLDDMIAGARVEVAPYKRSPTDFVLWKPAKPEEPGWESPWGRGRPGWHLECSAMSWKHLGEVFDIHGGGIDLVFPHHENEVAQTCSAFGHDVMANVWMHNGHLQVEGQKMSKSLGNFLTIRDVLKDWPGETVRFTMLKTHYRQPIDWTLSSLRESQRELDRWYPVARAFDQINPDNIPGIPSSFRDALQDDLNTPEAITILRRLYKDALETTDYAGVHLLLCGKLLGLFDQSLEKWKNWKPASFTVENVTFEDLIKEREEARAAKNWPKSDHLRDVLASYGIVLKDNKDGTTSWEAKR.

Residue cysteine 29 participates in Zn(2+) binding. The 'HIGH' region signature appears at 31–41 (PTVYDFLHIGN). Positions 211, 236, and 240 each coordinate Zn(2+). Positions 269 to 273 (KMSKS) match the 'KMSKS' region motif. Lysine 272 contributes to the ATP binding site.

The protein belongs to the class-I aminoacyl-tRNA synthetase family. Monomer. It depends on Zn(2+) as a cofactor.

It localises to the cytoplasm. The enzyme catalyses tRNA(Cys) + L-cysteine + ATP = L-cysteinyl-tRNA(Cys) + AMP + diphosphate. The protein is Cysteine--tRNA ligase of Beijerinckia indica subsp. indica (strain ATCC 9039 / DSM 1715 / NCIMB 8712).